The following is a 136-amino-acid chain: Large ribosomal subunit protein bL21 (136 aa).

Belongs to the bacterial ribosomal protein bL21 family. Part of the 50S ribosomal subunit. Contacts protein L20.

Functionally, this protein binds to 23S rRNA in the presence of protein L20. The chain is Large ribosomal subunit protein bL21 from Trichodesmium erythraeum (strain IMS101).